The primary structure comprises 154 residues: Small ribosomal subunit protein eS10 (154 aa).

The tract at residues 91 to 154 (ATMKKQASRP…ERSAPAPQQN (64 aa)) is disordered. Residues 124-135 (RGDRRQGGDRRG) are compositionally biased toward basic and acidic residues.

It belongs to the eukaryotic ribosomal protein eS10 family.

Its subcellular location is the cytoplasm. The sequence is that of Small ribosomal subunit protein eS10 (rps10) from Dictyostelium discoideum (Social amoeba).